The primary structure comprises 175 residues: ATP synthase subunit delta (175 aa).

The protein belongs to the ATPase delta chain family. In terms of assembly, F-type ATPases have 2 components, F(1) - the catalytic core - and F(0) - the membrane proton channel. F(1) has five subunits: alpha(3), beta(3), gamma(1), delta(1), epsilon(1). F(0) has three main subunits: a(1), b(2) and c(10-14). The alpha and beta chains form an alternating ring which encloses part of the gamma chain. F(1) is attached to F(0) by a central stalk formed by the gamma and epsilon chains, while a peripheral stalk is formed by the delta and b chains.

The protein localises to the cell inner membrane. Functionally, f(1)F(0) ATP synthase produces ATP from ADP in the presence of a proton or sodium gradient. F-type ATPases consist of two structural domains, F(1) containing the extramembraneous catalytic core and F(0) containing the membrane proton channel, linked together by a central stalk and a peripheral stalk. During catalysis, ATP synthesis in the catalytic domain of F(1) is coupled via a rotary mechanism of the central stalk subunits to proton translocation. This protein is part of the stalk that links CF(0) to CF(1). It either transmits conformational changes from CF(0) to CF(1) or is implicated in proton conduction. The chain is ATP synthase subunit delta from Xanthomonas axonopodis pv. citri (strain 306).